A 459-amino-acid chain; its full sequence is tRNA modification GTPase MnmE (459 aa).

Positions 20, 85, and 124 each coordinate (6S)-5-formyl-5,6,7,8-tetrahydrofolate. The 160-residue stretch at 221–380 (GISTVIIGRP…LEEAIQSLFF (160 aa)) folds into the TrmE-type G domain. A K(+)-binding site is contributed by asparagine 231. GTP contacts are provided by residues 231–236 (NVGKSS), 250–256 (TDIPGTT), and 275–278 (DTAG). Serine 235 contributes to the Mg(2+) binding site. K(+) contacts are provided by threonine 250, isoleucine 252, and threonine 255. Residue threonine 256 participates in Mg(2+) binding. Position 459 (lysine 459) interacts with (6S)-5-formyl-5,6,7,8-tetrahydrofolate.

The protein belongs to the TRAFAC class TrmE-Era-EngA-EngB-Septin-like GTPase superfamily. TrmE GTPase family. As to quaternary structure, homodimer. Heterotetramer of two MnmE and two MnmG subunits. K(+) is required as a cofactor.

The protein resides in the cytoplasm. Functionally, exhibits a very high intrinsic GTPase hydrolysis rate. Involved in the addition of a carboxymethylaminomethyl (cmnm) group at the wobble position (U34) of certain tRNAs, forming tRNA-cmnm(5)s(2)U34. The polypeptide is tRNA modification GTPase MnmE (Bacillus licheniformis (strain ATCC 14580 / DSM 13 / JCM 2505 / CCUG 7422 / NBRC 12200 / NCIMB 9375 / NCTC 10341 / NRRL NRS-1264 / Gibson 46)).